Consider the following 520-residue polypeptide: 2-isopropylmalate synthase (520 aa).

The 263-residue stretch at 12–274 (IRIFDTTLRD…DSAINTPRIV (263 aa)) folds into the Pyruvate carboxyltransferase domain. Mn(2+) contacts are provided by Asp21, His209, His211, and Asn245. The regulatory domain stretch occupies residues 396 to 520 (RLASMTISDV…VIAGKTAAVA (125 aa)).

It belongs to the alpha-IPM synthase/homocitrate synthase family. LeuA type 1 subfamily. Homodimer. The cofactor is Mn(2+).

Its subcellular location is the cytoplasm. The catalysed reaction is 3-methyl-2-oxobutanoate + acetyl-CoA + H2O = (2S)-2-isopropylmalate + CoA + H(+). The protein operates within amino-acid biosynthesis; L-leucine biosynthesis; L-leucine from 3-methyl-2-oxobutanoate: step 1/4. Catalyzes the condensation of the acetyl group of acetyl-CoA with 3-methyl-2-oxobutanoate (2-ketoisovalerate) to form 3-carboxy-3-hydroxy-4-methylpentanoate (2-isopropylmalate). This is 2-isopropylmalate synthase from Xanthomonas oryzae pv. oryzae (strain MAFF 311018).